Reading from the N-terminus, the 812-residue chain is Probable inorganic carbon transporter subunit DabA (812 aa).

Zn(2+)-binding residues include cysteine 337, aspartate 339, histidine 499, and cysteine 514.

Belongs to the inorganic carbon transporter (TC 9.A.2) DabA family. As to quaternary structure, forms a complex with DabB. Zn(2+) is required as a cofactor.

It is found in the cell inner membrane. Part of an energy-coupled inorganic carbon pump. This chain is Probable inorganic carbon transporter subunit DabA, found in Xanthomonas oryzae pv. oryzae (strain KACC10331 / KXO85).